The primary structure comprises 608 residues: Ceramide kinase (608 aa).

Residues 160-367 (ERPRNLLVFV…LDAMQVVRWK (208 aa)) enclose the DAGKc domain. ATP contacts are provided by residues 170 to 174 (HPKSG), threonine 201, and 230 to 236 (GDGFFNE). 229 to 232 (GGDG) contributes to the substrate binding site. Residue aspartate 231 is the Proton donor/acceptor of the active site. The tract at residues 254–280 (PSDSFNSVQSRGSSSVPEPGDEVHETD) is disordered. Residues 255–269 (SDSFNSVQSRGSSSV) show a composition bias toward polar residues. Serine 329 lines the ATP pocket.

Requires Ca(2+) as cofactor.

The catalysed reaction is an N-acylsphing-4-enine + ATP = an N-acylsphing-4-enine 1-phosphate + ADP + H(+). Functionally, catalyzes specifically the phosphorylation of ceramide to form ceramide 1-phosphate. Possesses high activity on ceramide analogs (C6, C8 synthetic ceramides) and lower activity on C6 and C8 dihydroceramides. Has weak activity on natural ceramides (a mixture of ceramides from bovine brain) and the synthetic substrate C2 ceramide. Has very poor activity on diacylglycerol and sphingosine. Ceramide is a critical sphingolipid metabolite that induces programmed cell death (PCD) in plants and ceramide-1-phosphate has a PCD suppressive effect. Thus, ceramide phosphorylation plays a role in the modulation of PCD and CERK activity is crucial for the maintenance of cell viability. In Arabidopsis thaliana (Mouse-ear cress), this protein is Ceramide kinase (CERK).